A 60-amino-acid polypeptide reads, in one-letter code: UPF0337 protein SACOL1680 (60 aa).

The protein belongs to the UPF0337 (CsbD) family.

The sequence is that of UPF0337 protein SACOL1680 from Staphylococcus aureus (strain COL).